Here is a 280-residue protein sequence, read N- to C-terminus: Protease HtpX (280 aa).

Helical transmembrane passes span 7-26 (TFIL…GLLG) and 30-49 (GMLV…YWYS). H129 is a Zn(2+) binding site. The active site involves E130. H133 is a Zn(2+) binding site. The next 2 membrane-spanning stretches (helical) occupy residues 146 to 166 (ATIA…SMFG) and 178 to 198 (VVGM…QMAI). A Zn(2+)-binding site is contributed by E203.

Belongs to the peptidase M48B family. Requires Zn(2+) as cofactor.

The protein resides in the cell inner membrane. The polypeptide is Protease HtpX (Legionella pneumophila (strain Corby)).